The chain runs to 135 residues: Interleukin-4 (135 aa).

A signal peptide spans 1-24 (MGLTSQLIPVLVCLLACTSHFVHG). 3 disulfide bridges follow: Cys-27-Cys-135, Cys-48-Cys-85, and Cys-70-Cys-105. N-linked (GlcNAc...) asparagine glycans are attached at residues Asn-62 and Asn-96.

Belongs to the IL-4/IL-13 family.

Its subcellular location is the secreted. Its function is as follows. Participates in at least several B-cell activation processes as well as of other cell types. It is a costimulator of DNA-synthesis. It induces the expression of class II MHC molecules on resting B-cells. It enhances both secretion and cell surface expression of IgE and IgG1. It also regulates the expression of the low affinity Fc receptor for IgE (CD23) on both lymphocytes and monocytes. Positively regulates IL31RA expression in macrophages. Stimulates autophagy in dendritic cells by interfering with mTORC1 signaling and through the induction of RUFY4. This is Interleukin-4 (IL4) from Cervus elaphus (Red deer).